The sequence spans 92 residues: Small ribosomal subunit protein uS19 (92 aa).

It belongs to the universal ribosomal protein uS19 family.

Functionally, protein S19 forms a complex with S13 that binds strongly to the 16S ribosomal RNA. This Gloeothece citriformis (strain PCC 7424) (Cyanothece sp. (strain PCC 7424)) protein is Small ribosomal subunit protein uS19.